The following is a 148-amino-acid chain: Sec-independent protein translocase protein TatB (148 aa).

The chain crosses the membrane as a helical span at residues 2–22 (FNDIGPLELVTLVVLAVLVFG). 2 stretches are compositionally biased toward basic and acidic residues: residues 100-110 (VTDAVHGRESE) and 128-148 (MTKK…ADAT). A disordered region spans residues 100–148 (VTDAVHGRESETSASSSSANGSAGGTVDMTKKREQLEADERPPFDADAT).

The protein belongs to the TatB family. The Tat system comprises two distinct complexes: a TatABC complex, containing multiple copies of TatA, TatB and TatC subunits, and a separate TatA complex, containing only TatA subunits. Substrates initially bind to the TatABC complex, which probably triggers association of the separate TatA complex to form the active translocon.

It is found in the cell membrane. In terms of biological role, part of the twin-arginine translocation (Tat) system that transports large folded proteins containing a characteristic twin-arginine motif in their signal peptide across membranes. Together with TatC, TatB is part of a receptor directly interacting with Tat signal peptides. TatB may form an oligomeric binding site that transiently accommodates folded Tat precursor proteins before their translocation. The protein is Sec-independent protein translocase protein TatB of Streptomyces avermitilis (strain ATCC 31267 / DSM 46492 / JCM 5070 / NBRC 14893 / NCIMB 12804 / NRRL 8165 / MA-4680).